The primary structure comprises 398 residues: MSPLLPSFPPAVLALADGSIFPGYSIGAPGETTGEVVFNTALTGYQEIITDPSYSRQIVTLTYPHIGNVGVNAQDAESDRIHAAGLVVKDLPKRVSSFRSEGALDDYLTKAGVLGIAGIDTRKLTRILRDKGAQSGAIVAGKVGDSYETLVSKALELAKAFPGMSGLDLAKVVTTQKVYEWREAEWNLHGADGKPAYGTLDTGKPINKVVAYDFGVKRNILRMLTERGCQLTVVPAQTTAAEVLAMNPDGVFFSNGPGDPGPCDYAIAAAKEIIEKGVPTFGICLGHQIMGLAAGAKTLKMKFGHHGANHPVKDLDTGRVAITSQNHGFAVDANTLPDNIRVTHVSLFDGSLQGLAWKDKPELCFQGHPEASPGPHDIAYLFDRFVELMNAASKKEGE.

The interval 1 to 204 is CPSase; the sequence is MSPLLPSFPP…PAYGTLDTGK (204 aa). Positions 53, 256, and 258 each coordinate L-glutamine. One can recognise a Glutamine amidotransferase type-1 domain in the interval 208–395; the sequence is KVVAYDFGVK…VELMNAASKK (188 aa). C284 serves as the catalytic Nucleophile. L-glutamine contacts are provided by L285, Q288, N326, G328, and F329. Residues H368 and E370 contribute to the active site.

It belongs to the CarA family. Composed of two chains; the small (or glutamine) chain promotes the hydrolysis of glutamine to ammonia, which is used by the large (or ammonia) chain to synthesize carbamoyl phosphate. Tetramer of heterodimers (alpha,beta)4.

The catalysed reaction is hydrogencarbonate + L-glutamine + 2 ATP + H2O = carbamoyl phosphate + L-glutamate + 2 ADP + phosphate + 2 H(+). It carries out the reaction L-glutamine + H2O = L-glutamate + NH4(+). It functions in the pathway amino-acid biosynthesis; L-arginine biosynthesis; carbamoyl phosphate from bicarbonate: step 1/1. The protein operates within pyrimidine metabolism; UMP biosynthesis via de novo pathway; (S)-dihydroorotate from bicarbonate: step 1/3. Its function is as follows. Small subunit of the glutamine-dependent carbamoyl phosphate synthetase (CPSase). CPSase catalyzes the formation of carbamoyl phosphate from the ammonia moiety of glutamine, carbonate, and phosphate donated by ATP, constituting the first step of 2 biosynthetic pathways, one leading to arginine and/or urea and the other to pyrimidine nucleotides. The small subunit (glutamine amidotransferase) binds and cleaves glutamine to supply the large subunit with the substrate ammonia. The sequence is that of Carbamoyl phosphate synthase small chain from Polynucleobacter necessarius subsp. necessarius (strain STIR1).